The sequence spans 614 residues: Elongation factor 4 (614 aa).

The tr-type G domain occupies Ala-10 to Val-192. GTP-binding positions include Asp-22–Thr-27 and Asn-139–Asp-142.

It belongs to the TRAFAC class translation factor GTPase superfamily. Classic translation factor GTPase family. LepA subfamily.

It localises to the cell membrane. It carries out the reaction GTP + H2O = GDP + phosphate + H(+). Required for accurate and efficient protein synthesis under certain stress conditions. May act as a fidelity factor of the translation reaction, by catalyzing a one-codon backward translocation of tRNAs on improperly translocated ribosomes. Back-translocation proceeds from a post-translocation (POST) complex to a pre-translocation (PRE) complex, thus giving elongation factor G a second chance to translocate the tRNAs correctly. Binds to ribosomes in a GTP-dependent manner. This Thermobifida fusca (strain YX) protein is Elongation factor 4.